The following is a 104-amino-acid chain: Integration host factor subunit alpha (104 aa).

The protein belongs to the bacterial histone-like protein family. Heterodimer of an alpha and a beta chain.

In terms of biological role, this protein is one of the two subunits of integration host factor, a specific DNA-binding protein that functions in genetic recombination as well as in transcriptional and translational control. The sequence is that of Integration host factor subunit alpha from Methylobacterium sp. (strain 4-46).